The chain runs to 159 residues: Ribosomal RNA large subunit methyltransferase H (159 aa).

S-adenosyl-L-methionine-binding positions include Gly-108 and 127 to 132 (FSKMTF).

The protein belongs to the RNA methyltransferase RlmH family. Homodimer.

It localises to the cytoplasm. The enzyme catalyses pseudouridine(1915) in 23S rRNA + S-adenosyl-L-methionine = N(3)-methylpseudouridine(1915) in 23S rRNA + S-adenosyl-L-homocysteine + H(+). Its function is as follows. Specifically methylates the pseudouridine at position 1915 (m3Psi1915) in 23S rRNA. This is Ribosomal RNA large subunit methyltransferase H from Clostridium perfringens (strain ATCC 13124 / DSM 756 / JCM 1290 / NCIMB 6125 / NCTC 8237 / Type A).